A 249-amino-acid polypeptide reads, in one-letter code: Proteasome activator complex subunit 1 (249 aa).

The interval Ser55–Gly102 is disordered. Residues Pro68–Gly98 are compositionally biased toward basic and acidic residues.

This sequence belongs to the PA28 family. In terms of assembly, heterodimer of PSME1 and PSME2, which forms a hexameric ring. PSME1 can form homoheptamers.

Implicated in immunoproteasome assembly and required for efficient antigen processing. The PA28 activator complex enhances the generation of class I binding peptides by altering the cleavage pattern of the proteasome. This Bos taurus (Bovine) protein is Proteasome activator complex subunit 1 (PSME1).